The primary structure comprises 312 residues: Cathepsin O (312 aa).

An N-terminal signal peptide occupies residues 1-23 (MKPQLVNLLLLCCCCLGRHGVAG). The propeptide at 24–98 (TWSWSHQREA…EGQRPIPNVS (75 aa)) is activation peptide. N-linked (GlcNAc...) asparagine glycans are attached at residues asparagine 53 and asparagine 96. Intrachain disulfides connect cysteine 120–cysteine 161, cysteine 154–cysteine 195, and cysteine 253–cysteine 301. The active site involves cysteine 123. Catalysis depends on residues histidine 260 and asparagine 280.

This sequence belongs to the peptidase C1 family.

It localises to the lysosome. The enzyme catalyses The recombinant human enzyme hydrolyzes synthetic endopeptidase substrates including Z-Phe-Arg-NHMec and Z-Arg-Arg-NHMec.. Proteolytic enzyme possibly involved in normal cellular protein degradation and turnover. The sequence is that of Cathepsin O (Ctso) from Mus musculus (Mouse).